We begin with the raw amino-acid sequence, 466 residues long: GTPase Der (466 aa).

2 EngA-type G domains span residues 30-193 (PVVA…PEVS) and 203-376 (RRVA…ASWD). GTP is bound by residues 36 to 43 (GRPNVGKS), 83 to 87 (DTGGW), 145 to 148 (NKVD), 209 to 216 (GKPNVGKS), 256 to 260 (DTAGL), and 321 to 324 (NKWD). The region spanning 377 to 459 (TRIATGPLNS…PIRINVRVRE (83 aa)) is the KH-like domain.

Belongs to the TRAFAC class TrmE-Era-EngA-EngB-Septin-like GTPase superfamily. EngA (Der) GTPase family. As to quaternary structure, associates with the 50S ribosomal subunit.

GTPase that plays an essential role in the late steps of ribosome biogenesis. This is GTPase Der from Mycobacterium avium (strain 104).